Consider the following 326-residue polypeptide: Zinc finger protein 830 (326 aa).

The segment covering 1–11 (MAASRKGKAVK) has biased composition (basic residues). The tract at residues 1–37 (MAASRKGKAVKAVKQEDLRRLMQETRRDSGRQKRVES) is disordered. Residues 13–36 (VKQEDLRRLMQETRRDSGRQKRVE) are compositionally biased toward basic and acidic residues. The segment at 50–72 (CALCDAPVKNALLWQTHVLGKQH) adopts a C2H2-type zinc-finger fold. Residues 83 to 108 (TAPAHTPAPAHTPAHTPAAASSSSST) show a composition bias toward low complexity. 3 disordered regions span residues 83-214 (TAPA…PVRD), 237-257 (EMRQ…EEGR), and 276-309 (EELR…EEEE). The segment covering 180–195 (HSGSVSKAEQQESQEP) has biased composition (polar residues). Positions 224–295 (KDQLEREWEE…RSRRRSQRRE (72 aa)) form a coiled coil. Basic and acidic residues predominate over residues 276–286 (EELRAKQETAR). Acidic residues predominate over residues 298 to 309 (PMQEEEPLEEEE).

The protein localises to the nucleus. The protein resides in the chromosome. It localises to the nucleus speckle. May act as an important regulator of the cell cycle that participates in the maintenance of genome integrity. In Danio rerio (Zebrafish), this protein is Zinc finger protein 830.